We begin with the raw amino-acid sequence, 442 residues long: Betaine reductase complex component B subunit alpha (442 aa).

Heterotetramer of two alpha and two beta subunits. Component of the betaine reductase complex, together with components A and C. PB is substrate specific.

It catalyses the reaction acetyl phosphate + trimethylamine + [thioredoxin]-disulfide + H2O = glycine betaine + [thioredoxin]-dithiol + phosphate + H(+). Functionally, in the first step of betaine reductase, the substrate is bound to component PB via a Schiff base intermediate. Then the PB-activated substrate is nucleophilically attacked by the selenol anion of component PA to transform it to a carboxymethylated selenoether and the respective amine. By action of component PC, acetyl phosphate is formed, leaving component PA in its oxidized state. Finally component PA becomes reduced by the thioredoxin system to start a new catalytic cycle of reductive deamination. The sequence is that of Betaine reductase complex component B subunit alpha (grdI) from Peptoclostridium acidaminophilum (Eubacterium acidaminophilum).